The sequence spans 1435 residues: Protein SPP41 (1435 aa).

Disordered regions lie at residues 16–74, 88–265, 286–309, 322–424, 442–482, 519–708, and 934–972; these read VGNL…NIEI, VANA…ENTL, AKQT…VEAQ, ELLS…DDEF, ETST…DSLD, SVSD…MKVP, and QQLD…AGHT. A compositionally biased stretch (acidic residues) spans 27–42; it reads GQEEGEVQGGEQEGDD. Basic and acidic residues-rich tracts occupy residues 53–63, 98–127, and 139–154; these read IEPKHPDDSQH, EQAK…KEQQ, and LKSD…ERRV. One can recognise a UIM domain in the interval 171 to 190; that stretch reads QDDENLRMAILESLQELNTN. The span at 196-205 shows a compositional bias: basic and acidic residues; it reads EPEKHEHAAP. Positions 211 to 223 are enriched in basic residues; it reads SKKSSKKKKKDKS. The segment covering 224-234 has biased composition (basic and acidic residues); that stretch reads KNRESSKDKSS. Over residues 235–249 the composition is skewed to basic residues; it reads KKSKSSSHSKKHAKD. Positions 286–301 are enriched in polar residues; it reads AKQTVDIQDNSHTDNT. The span at 345-355 shows a compositional bias: basic and acidic residues; sequence KAVEPPRKPTA. Residues 367 to 383 are compositionally biased toward basic residues; the sequence is KPKKRPPQEKKKTKSKT. The segment covering 384-398 has biased composition (low complexity); the sequence is SKAASTANKSPASES. Polar residues-rich tracts occupy residues 442 to 451 and 459 to 482; these read ETSTHTATQD and DFTS…DSLD. Basic and acidic residues-rich tracts occupy residues 524–548, 610–628, and 637–652; these read LPHD…EKKT, KNKE…AREE, and KQRL…KIVE. Positions 665 to 674 are enriched in basic residues; it reads KSGKPKKPYR. A compositionally biased stretch (basic and acidic residues) spans 676 to 691; sequence WTPEELLKRSQEAEKP. The Nuclear localization signal motif lies at 683-699; the sequence is KRSQEAEKPRKVKKERK. A compositionally biased stretch (basic residues) spans 692 to 706; sequence RKVKKERKKKEKKMK. A Glycyl lysine isopeptide (Lys-Gly) (interchain with G-Cter in SUMO) cross-link involves residue Lys-981. Residues 1005-1014 show a composition bias toward basic and acidic residues; that stretch reads KLELTKRAES. The tract at residues 1005-1125 is disordered; it reads KLELTKRAES…DSVNTTTGKP (121 aa). Ser-1014 is subject to Phosphoserine. The segment covering 1021-1032 has biased composition (polar residues); it reads NVETAKETQSVQ. 2 stretches are compositionally biased toward basic and acidic residues: residues 1033-1082 and 1091-1103; these read EIKE…EKIA and LSDK…KSTL. Residue Ser-1067 is modified to Phosphoserine. A compositionally biased stretch (polar residues) spans 1108-1123; sequence AQLTGNEPDSVNTTTG. A Glycyl lysine isopeptide (Lys-Gly) (interchain with G-Cter in SUMO) cross-link involves residue Lys-1154.

Interacts with PRP8 and RAP1.

It localises to the nucleus. Functionally, negative regulator of PRP3 and PRP4 genes. In Saccharomyces cerevisiae (strain ATCC 204508 / S288c) (Baker's yeast), this protein is Protein SPP41 (SPP41).